Consider the following 480-residue polypeptide: Adenosylhomocysteinase (480 aa).

Residues Thr63, Asp142, and Glu203 each contribute to the substrate site. NAD(+) is bound at residue 204 to 206 (TTT). Residues Lys233 and Asp237 each coordinate substrate. NAD(+)-binding positions include Asn238, 267-272 (GYGDVG), Glu290, Asn325, 346-348 (IGH), and Asn394.

Belongs to the adenosylhomocysteinase family. The cofactor is NAD(+).

The protein localises to the cytoplasm. The enzyme catalyses S-adenosyl-L-homocysteine + H2O = L-homocysteine + adenosine. It participates in amino-acid biosynthesis; L-homocysteine biosynthesis; L-homocysteine from S-adenosyl-L-homocysteine: step 1/1. Its function is as follows. May play a key role in the regulation of the intracellular concentration of adenosylhomocysteine. The polypeptide is Adenosylhomocysteinase (Xylella fastidiosa (strain M12)).